We begin with the raw amino-acid sequence, 567 residues long: Mitogen-activated protein kinase 16 (567 aa).

The region spanning 25-316 (YRIEEVIGKG…AEEALADVYF (292 aa)) is the Protein kinase domain. Residues 31-39 (IGKGSYGVV) and lysine 54 contribute to the ATP site. The active-site Proton acceptor is aspartate 151. Threonine 187 is modified (phosphothreonine). The TXY signature appears at 187–189 (TDY). Tyrosine 189 bears the Phosphotyrosine mark. Position 192 is a phosphothreonine (threonine 192). Disordered stretches follow at residues 428 to 455 (AQQS…ADRN) and 512 to 567 (PAAA…SRWY). Residues 443–453 (SIRDERPRGAD) are compositionally biased toward basic and acidic residues. Positions 545–567 (KPNTQYIPQKVSAAQDTAMSRWY) are enriched in polar residues.

It belongs to the protein kinase superfamily. CMGC Ser/Thr protein kinase family. MAP kinase subfamily. Post-translationally, dually phosphorylated on Thr-187 and Tyr-189, which activates the enzyme.

It catalyses the reaction L-seryl-[protein] + ATP = O-phospho-L-seryl-[protein] + ADP + H(+). The catalysed reaction is L-threonyl-[protein] + ATP = O-phospho-L-threonyl-[protein] + ADP + H(+). Activated by threonine and tyrosine phosphorylation. The sequence is that of Mitogen-activated protein kinase 16 (MPK16) from Arabidopsis thaliana (Mouse-ear cress).